The following is a 261-amino-acid chain: MSGMVALRLPRGLWTAALTVMLVVLGAPVAEGRDSPQDFVFQFKGECYFYNGTQRVRGVARYIYNQEEHLRFDSDVGEFRAVTPLGRPEADSWNSQKDVLEQMRAEVDRVCKHNYQIEEGTTLQRRVQPTVTISPSKAEALNHHNLLVCAVTDFYPSQVKVQWFRNGQEETAGVVSTPLIRNGDWTYQVLVMLEMNLQRGDVYTCRVEHSSLQNPILVEWRAQSESAQSKMLSGVGGFVLGLIFLGLGLFIRHRSQKGLVR.

An N-terminal signal peptide occupies residues 1-31; the sequence is MSGMVALRLPRGLWTAALTVMLVVLGAPVAE. The tract at residues 32-126 is beta-1; the sequence is GRDSPQDFVF…IEEGTTLQRR (95 aa). Residues 32-230 lie on the Extracellular side of the membrane; that stretch reads GRDSPQDFVF…RAQSESAQSK (199 aa). 2 disulfides stabilise this stretch: Cys-47/Cys-111 and Cys-149/Cys-205. An N-linked (GlcNAc...) asparagine glycan is attached at Asn-51. Positions 127–220 are beta-2; it reads VQPTVTISPS…SLQNPILVEW (94 aa). In terms of domain architecture, Ig-like C1-type spans 129 to 233; sequence PTVTISPSKA…SESAQSKMLS (105 aa). Positions 221-230 are connecting peptide; sequence RAQSESAQSK. Residues 231-251 form a helical membrane-spanning segment; sequence MLSGVGGFVLGLIFLGLGLFI. The Cytoplasmic segment spans residues 252–261; sequence RHRSQKGLVR.

This sequence belongs to the MHC class II family.

The protein localises to the membrane. The sequence is that of SLA class II histocompatibility antigen, DQ haplotype C beta chain from Sus scrofa (Pig).